A 391-amino-acid chain; its full sequence is Pyruvate dehydrogenase E1 component subunit alpha, mitochondrial (391 aa).

The transit peptide at 1-26 (MALSTSRAINHIMKPLSAAVCATRRL) directs the protein to the mitochondrion. Positions 92, 118, 119, 167, 169, 198, 199, 200, 227, and 229 each coordinate pyruvate. Thiamine diphosphate contacts are provided by Y118, R119, G167, V169, D198, G199, A200, and N227. D198 is a Mg(2+) binding site. Residues N227 and Y229 each coordinate Mg(2+). H293 serves as a coordination point for thiamine diphosphate. The tract at residues 294 to 313 (SMSDPGSTYRTRDEISGVRQ) is disordered. The span at 303–313 (RTRDEISGVRQ) shows a compositional bias: basic and acidic residues.

In terms of assembly, tetramer of 2 alpha and 2 beta subunits. The cofactor is thiamine diphosphate. It depends on Mg(2+) as a cofactor.

Its subcellular location is the mitochondrion matrix. The enzyme catalyses N(6)-[(R)-lipoyl]-L-lysyl-[protein] + pyruvate + H(+) = N(6)-[(R)-S(8)-acetyldihydrolipoyl]-L-lysyl-[protein] + CO2. E1 activity is regulated by phosphorylation (inactivation) and dephosphorylation (activation) of the alpha subunit. The pyruvate dehydrogenase complex catalyzes the overall conversion of pyruvate to acetyl-CoA and CO(2). It contains multiple copies of three enzymatic components: pyruvate dehydrogenase (E1), dihydrolipoamide acetyltransferase (E2) and lipoamide dehydrogenase (E3). This chain is Pyruvate dehydrogenase E1 component subunit alpha, mitochondrial, found in Solanum tuberosum (Potato).